Reading from the N-terminus, the 124-residue chain is Fluoride-specific ion channel FluC (124 aa).

Transmembrane regions (helical) follow at residues 5–25 (ILAV…AGTW), 37–57 (ATLA…GLFL), 69–89 (GLIV…LDTL), and 99–119 (LALG…WAGL). Residues G76 and T79 each coordinate Na(+).

It belongs to the fluoride channel Fluc/FEX (TC 1.A.43) family.

It localises to the cell inner membrane. It catalyses the reaction fluoride(in) = fluoride(out). Na(+) is not transported, but it plays an essential structural role and its presence is essential for fluoride channel function. Functionally, fluoride-specific ion channel. Important for reducing fluoride concentration in the cell, thus reducing its toxicity. The chain is Fluoride-specific ion channel FluC from Pseudomonas syringae pv. tomato (strain ATCC BAA-871 / DC3000).